A 340-amino-acid polypeptide reads, in one-letter code: Dihydroorotate dehydrogenase (quinone) (340 aa).

FMN contacts are provided by residues 65–69 (AGADK) and Thr-89. Substrate is bound at residue Lys-69. 114–118 (NRNGF) contacts substrate. Positions 142 and 175 each coordinate FMN. Asn-175 lines the substrate pocket. Ser-178 (nucleophile) is an active-site residue. Substrate is bound at residue Asn-180. Residues Lys-220 and Thr-248 each contribute to the FMN site. 249–250 (NT) contributes to the substrate binding site. FMN-binding positions include Gly-271, Gly-300, and 321 to 322 (YS).

This sequence belongs to the dihydroorotate dehydrogenase family. Type 2 subfamily. As to quaternary structure, monomer. It depends on FMN as a cofactor.

Its subcellular location is the cell membrane. The enzyme catalyses (S)-dihydroorotate + a quinone = orotate + a quinol. It participates in pyrimidine metabolism; UMP biosynthesis via de novo pathway; orotate from (S)-dihydroorotate (quinone route): step 1/1. Its function is as follows. Catalyzes the conversion of dihydroorotate to orotate with quinone as electron acceptor. The sequence is that of Dihydroorotate dehydrogenase (quinone) from Actinobacillus succinogenes (strain ATCC 55618 / DSM 22257 / CCUG 43843 / 130Z).